Here is a 284-residue protein sequence, read N- to C-terminus: Bifunctional protein FolD (284 aa).

NADP(+) contacts are provided by residues 165–167 (GAS), S190, and I231.

Belongs to the tetrahydrofolate dehydrogenase/cyclohydrolase family. In terms of assembly, homodimer.

It carries out the reaction (6R)-5,10-methylene-5,6,7,8-tetrahydrofolate + NADP(+) = (6R)-5,10-methenyltetrahydrofolate + NADPH. The enzyme catalyses (6R)-5,10-methenyltetrahydrofolate + H2O = (6R)-10-formyltetrahydrofolate + H(+). It participates in one-carbon metabolism; tetrahydrofolate interconversion. Catalyzes the oxidation of 5,10-methylenetetrahydrofolate to 5,10-methenyltetrahydrofolate and then the hydrolysis of 5,10-methenyltetrahydrofolate to 10-formyltetrahydrofolate. In Polynucleobacter necessarius subsp. necessarius (strain STIR1), this protein is Bifunctional protein FolD.